A 359-amino-acid polypeptide reads, in one-letter code: Alanine racemase (359 aa).

The active-site Proton acceptor; specific for D-alanine is Lys34. The residue at position 34 (Lys34) is an N6-(pyridoxal phosphate)lysine. Arg129 is a binding site for substrate. Tyr254 functions as the Proton acceptor; specific for L-alanine in the catalytic mechanism. A substrate-binding site is contributed by Met302.

The protein belongs to the alanine racemase family. The cofactor is pyridoxal 5'-phosphate.

It catalyses the reaction L-alanine = D-alanine. Its pathway is amino-acid biosynthesis; D-alanine biosynthesis; D-alanine from L-alanine: step 1/1. In terms of biological role, catalyzes the interconversion of L-alanine and D-alanine. May also act on other amino acids. The polypeptide is Alanine racemase (alr) (Yersinia pestis).